An 846-amino-acid chain; its full sequence is Homeodomain-interacting protein kinase 1 (846 aa).

The segment at 47-74 (NPFSIQKAPGTSSDNEQRAPKRRADEEA) is disordered. Over residues 61 to 72 (NEQRAPKRRADE) the composition is skewed to basic and acidic residues. A Protein kinase domain is found at 147–483 (YEVLEFLGKG…PAEGLESKFV (337 aa)). Residues 153–161 (LGKGTFGQV) and lysine 176 each bind ATP. Aspartate 272 (proton acceptor) is an active-site residue. The segment at 741 to 790 (LAAQPKKNSPAPSVITLSSDEDSNGAGSSNSGSTTRTGAVNPVRNDTLPM) is disordered. Positions 746–757 (KKNSPAPSVITL) are enriched in polar residues. Over residues 764–773 (NGAGSSNSGS) the composition is skewed to low complexity.

Belongs to the protein kinase superfamily. CMGC Ser/Thr protein kinase family. HIPK subfamily. In terms of tissue distribution, broadly expressed during embryogenesis. Expression becomes more restricted during larval development. L3 larvae display robust expression in many head and motor neurons, and lower levels of expression in the intestine and the seam cells of the hypodermis. By late L4 stage, expression is largely restricted to neurons and is maintained in nerve cells of the head and nerve cord during adulthood. Expressed in adult pharyngeal cells, hypodermal cells, gonadal sheath cells and distal tip cells but not in germline cells. Expressed in serotonergic neurons such as ADF and NSM and in GABAergic neurons, including RME, RIS and DVB.

Its subcellular location is the nucleus. It carries out the reaction L-seryl-[protein] + ATP = O-phospho-L-seryl-[protein] + ADP + H(+). The catalysed reaction is L-threonyl-[protein] + ATP = O-phospho-L-threonyl-[protein] + ADP + H(+). Serine/threonine-protein kinase required in the somatic gonadal cells to regulate germline proliferation during larval development and in adulthood. Plays a role in the development/differentiation of gonadal distal tip cells. Required for normal lifespan in a pha-4 and mxl-2-dependent manner. Also contributes to survival following heat or oxidative stress. Prevents sumoylation and inactivation of heat shock transcription factor hsf-1 which enhances hsf-1-dependent transcriptional induction of chaperones in response to heat shock. Also required for hormetic extension of longevity in response to heat stress. Also contributes to longevity by promoting autophagy under nutrient stress conditions through induction of autophagosome formation and autophagy gene expression. Provides protection against proteotoxic polyglutamine aggregate and the associated locomotory toxicity, probably as a result of kinase activity. Contributes to longevity via gamma-aminobutyric acid (GABA)ergic signaling by promoting autophagy through mxl-2, hlh-30 and daf-16 but independent of hsf-1 and phas-4, to induce autophagosome formation and the expression of autophagy genes. Promotes thermotolerance via serotonergic signaling by serotonergic neurons. Preserves neuronal function in aging animals by mitigating against age-associated decline in axonal and synaptic transmissions. Acts as an activator of nhr-49-dependent hypoxia response, including the up-regulation of fmo-2 and acs-2, the induction of autophagosome formation and expression of autophagy genes. This is Homeodomain-interacting protein kinase 1 from Caenorhabditis elegans.